Here is a 635-residue protein sequence, read N- to C-terminus: Chaperone protein HtpG (635 aa).

An a; substrate-binding region spans residues Met-1 to Arg-337. The b stretch occupies residues Glu-338–Arg-556. Residues Phe-557 to Val-635 are c.

This sequence belongs to the heat shock protein 90 family. As to quaternary structure, homodimer.

The protein resides in the cytoplasm. Functionally, molecular chaperone. Has ATPase activity. The sequence is that of Chaperone protein HtpG from Wolbachia pipientis wMel.